Consider the following 295-residue polypeptide: Shikimate dehydrogenase (NADP(+)) (295 aa).

Residues 20-22 (SWS) and Thr-68 each bind shikimate. Lys-72 serves as the catalytic Proton acceptor. Shikimate is bound by residues Asn-93 and Asp-108. NADP(+)-binding positions include 132–136 (GNGGA) and Met-234. Tyr-236 provides a ligand contact to shikimate. Residue Gly-257 participates in NADP(+) binding.

Belongs to the shikimate dehydrogenase family. In terms of assembly, homodimer.

It carries out the reaction shikimate + NADP(+) = 3-dehydroshikimate + NADPH + H(+). The protein operates within metabolic intermediate biosynthesis; chorismate biosynthesis; chorismate from D-erythrose 4-phosphate and phosphoenolpyruvate: step 4/7. In terms of biological role, involved in the biosynthesis of the chorismate, which leads to the biosynthesis of aromatic amino acids. Catalyzes the reversible NADPH linked reduction of 3-dehydroshikimate (DHSA) to yield shikimate (SA). The sequence is that of Shikimate dehydrogenase (NADP(+)) from Chlorobaculum tepidum (strain ATCC 49652 / DSM 12025 / NBRC 103806 / TLS) (Chlorobium tepidum).